A 382-amino-acid chain; its full sequence is Na(+)/H(+) antiporter NhaA 2 (382 aa).

11 helical membrane-spanning segments follow: residues methionine 7–leucine 27, leucine 58–leucine 78, serine 94–isoleucine 114, glycine 124–glycine 144, leucine 153–phenylalanine 173, leucine 178–tyrosine 198, tyrosine 199–leucine 219, asparagine 255–isoleucine 275, isoleucine 291–isoleucine 311, phenylalanine 327–leucine 347, and leucine 361–valine 381.

Belongs to the NhaA Na(+)/H(+) (TC 2.A.33) antiporter family.

It is found in the cell inner membrane. It catalyses the reaction Na(+)(in) + 2 H(+)(out) = Na(+)(out) + 2 H(+)(in). Functionally, na(+)/H(+) antiporter that extrudes sodium in exchange for external protons. This chain is Na(+)/H(+) antiporter NhaA 2, found in Campylobacter jejuni subsp. doylei (strain ATCC BAA-1458 / RM4099 / 269.97).